We begin with the raw amino-acid sequence, 312 residues long: MLNIVCRVCGRQKICEKSLNLFDLVNRKYLKHLHMISGLRLVDLDDVPGFMCLCCQAELRSALAFRKLCIKTQTKWLTIEDDSSSGDEDTNDNSELESEKCAFSDFGKKKEGELVEETFQVLIEEEPMDKTLNRDAKAQLREDGIDEKCVPSQKIIKVSTKLDDQIYICELCGTHATSKPTFQRHMRKHRGERPFGCKDCDARFLSAGELRAHHRVHTGEQPFACRFCEKRYVSYMGRLIHERTHTNDRPYVCEECGKKFTTAYVLKNHMVIHTGERNFRCDICDRSFQRKAHLVTHTRSMMHLQNVKKQKS.

In terms of domain architecture, ZAD spans 4-79 (IVCRVCGRQK…IKTQTKWLTI (76 aa)). Zn(2+)-binding residues include cysteine 6, cysteine 9, cysteine 52, and cysteine 55. 5 C2H2-type zinc fingers span residues 167–189 (YICELCGTHATSKPTFQRHMRKH), 195–217 (FGCKDCDARFLSAGELRAHHRVH), 223–245 (FACRFCEKRYVSYMGRLIHERTH), 251–273 (YVCEECGKKFTTAYVLKNHMVIH), and 279–303 (FRCDICDRSFQRKAHLVTHTRSMMH).

As to expression, expressed predominantly in the prothoracic gland during embryonic and larval development.

The protein localises to the nucleus. Transcription factor required for ecdysteroid production in the prothoracic gland by activating transcription of the ecdysteroid biosynthesis gene spok. Binds to the 5'-AGCTTTATTATTTAG-3' DNA sequence in the spok enhancer region. The sequence is that of Transcription factor Ouib from Drosophila melanogaster (Fruit fly).